The sequence spans 395 residues: Phosphoglycerate kinase (395 aa).

Residues Asp21 to Asn23, Arg36, His59 to Arg62, Arg113, and Arg146 contribute to the substrate site. ATP-binding positions include Lys197, Glu324, and Gly350–Thr353.

The protein belongs to the phosphoglycerate kinase family. In terms of assembly, monomer.

It localises to the cytoplasm. It carries out the reaction (2R)-3-phosphoglycerate + ATP = (2R)-3-phospho-glyceroyl phosphate + ADP. Its pathway is carbohydrate degradation; glycolysis; pyruvate from D-glyceraldehyde 3-phosphate: step 2/5. The chain is Phosphoglycerate kinase from Acinetobacter baumannii (strain AB307-0294).